A 150-amino-acid chain; its full sequence is MCLMLLLLLNLEATVKAAVLIPQSSVCPNAEANNFLQNVKVNLKVINSLSSKASSRRPSDYLNRSTSPWTLSRNEDPDRYPSVIWEAQCRHQRCVNAEGKLDHHMNSVLIQQEILVLKREPEKCPFTFRVEKMLVGVGCTCVSSIVRHAS.

The signal sequence occupies residues 1–17 (MCLMLLLLLNLEATVKA). A disordered region spans residues 54–75 (SSRRPSDYLNRSTSPWTLSRNE). Residues 62–72 (LNRSTSPWTLS) are compositionally biased toward polar residues. An N-linked (GlcNAc...) asparagine glycan is attached at asparagine 63. Cystine bridges form between cysteine 89/cysteine 139 and cysteine 94/cysteine 141.

Belongs to the IL-17 family. In terms of assembly, homodimer. Forms complexes with IL17RA and IL17RC receptors with 2:1 binding stoichiometry: two receptor chains for one interleukin molecule. IL17A homodimer preferentially drives the formation of IL17RA-IL17RC heterodimeric receptor complex. IL17A homodimer adopts an asymmetrical ternary structure with one IL17RA molecule, allowing for high affinity interactions of one IL17A monomer with one IL17RA molecule (via D1 and D2 domains), while disfavoring binding of a second IL17RA molecule on the other IL17A monomer. Heterodimer with IL17F. IL17A-IL17F forms complexes with IL17RA-IL17RC, but with lower affinity when compared to IL17A homodimer. IL17RA and IL17RC chains cannot distinguish between IL17A and IL17F molecules, potentially enabling the formation of topologically distinct complexes.

It is found in the secreted. Effector cytokine of innate and adaptive immune system involved in antimicrobial host defense and maintenance of tissue integrity. Signals via IL17RA-IL17RC heterodimeric receptor complex, triggering homotypic interaction of IL17RA and IL17RC chains with TRAF3IP2 adapter. This leads to downstream TRAF6-mediated activation of NF-kappa-B and MAPkinase pathways ultimately resulting in transcriptional activation of cytokines, chemokines, antimicrobial peptides and matrix metalloproteinases, with potential strong immune inflammation. Plays an important role in connecting T cell-mediated adaptive immunity and acute inflammatory response to destroy extracellular bacteria and fungi. As a signature effector cytokine of T-helper 17 cells (Th17), primarily induces neutrophil activation and recruitment at infection and inflammatory sites. In airway epithelium, mediates neutrophil chemotaxis via induction of CXCL1 and CXCL5 chemokines. In secondary lymphoid organs, contributes to germinal center formation by regulating the chemotactic response of B cells to CXCL12 and CXCL13, enhancing retention of B cells within the germinal centers, B cell somatic hypermutation rate and selection toward plasma cells. Effector cytokine of a subset of gamma-delta T cells that functions as part of an inflammatory circuit downstream IL1B, TLR2 and IL23A-IL12B to promote neutrophil recruitment for efficient bacterial clearance. Effector cytokine of innate immune cells including invariant natural killer cell (iNKT) and group 3 innate lymphoid cells that mediate initial neutrophilic inflammation. Involved in the maintenance of the integrity of epithelial barriers during homeostasis and pathogen infection. Upon acute injury, has a direct role in epithelial barrier formation by regulating OCLN localization and tight junction biogenesis. As part of the mucosal immune response induced by commensal bacteria, enhances host's ability to resist pathogenic bacterial and fungal infections by promoting neutrophil recruitment and antimicrobial peptides release. In synergy with IL17F, mediates the production of antimicrobial beta-defensins DEFB1, DEFB103A, and DEFB104A by mucosal epithelial cells, limiting the entry of microbes through the epithelial barriers. Involved in antiviral host defense through various mechanisms. The polypeptide is Interleukin-17A (Il17a) (Rattus norvegicus (Rat)).